We begin with the raw amino-acid sequence, 61 residues long: Large ribosomal subunit protein uL30 (61 aa).

It belongs to the universal ribosomal protein uL30 family. Part of the 50S ribosomal subunit.

This chain is Large ribosomal subunit protein uL30, found in Chlorobium phaeovibrioides (strain DSM 265 / 1930) (Prosthecochloris vibrioformis (strain DSM 265)).